Reading from the N-terminus, the 72-residue chain is ATP synthase subunit L (72 aa).

As to quaternary structure, F-type ATP synthases have 2 components, the catalytic core F(1) and the membrane-embedded component F(0), linked together by a central stalk and a peripheral stalk. The central stalk, also called rotor shaft, is often seen as part of F(1). The peripheral stalk is seen as part of F(0). F(0) contains the membrane channel next to the rotor. F-type ATP synthases form dimers but each monomer functions independently in ATP generation. The dimer consists of 18 different polypeptides: ATP1 (subunit alpha, part of F(1), 3 molecules per monomer), ATP2 (subunit beta, part of F(1), 3 molecules per monomer), ATP3 (subunit gamma, part of the central stalk), ATP4 (subunit b, part of the peripheral stalk), ATP5/OSCP (subunit 5/OSCP, part of the peripheral stalk), ATP6 (subunit a, part of the peripheral stalk), ATP7 (subunit d, part of the peripheral stalk), ATP8 (subunit 8, part of the peripheral stalk), OLI1 (subunit c, part of the rotor, 10 molecules per monomer), ATP14 (subunit h, part of the peripheral stalk), ATP15 (subunit epsilon, part of the central stalk), ATP16 (subunit delta, part of the central stalk), ATP17 (subunit f, part of the peripheral stalk), ATP18 (subunit i/j, part of the peripheral stalk). Dimer-specific subunits are ATP19 (subunit k, at interface between monomers), ATP20 (subunit g, at interface between monomers), TIM11 (subunit e, at interface between monomers). Also contains subunit L.

It localises to the mitochondrion inner membrane. Its function is as follows. Mitochondrial membrane ATP synthase (F(1)F(0) ATP synthase or Complex V) produces ATP from ADP in the presence of a proton gradient across the membrane which is generated by electron transport complexes of the respiratory chain. F-type ATP synthases consist of two structural domains, F(1) - containing the extramembraneous catalytic core, and F(0) - containing the membrane proton channel, linked together by a central stalk and a peripheral stalk. During catalysis, ATP synthesis in the catalytic domain of F(1) is coupled via a rotary mechanism of the central stalk subunits to proton translocation. The chain is ATP synthase subunit L from Pichia angusta (Yeast).